The sequence spans 387 residues: Protein salvador homolog 1 (387 aa).

Residues S95 and S138 each carry the phosphoserine modification. 2 WW domains span residues 201 to 234 (LPLP…HPLE) and 236 to 269 (EGLP…HPCA). T212 carries the phosphothreonine modification. Residues 323–370 (ILKWELFQLADLDTYQGMLKLLFMKELEQIVKLYEAYRQALVTELENR) enclose the SARAH domain.

Homodimer. Stabilized through interaction with STK3/MST2 or STK4/MST1. Interacts (via SARAH domain) with isoform 1 of NEK2. Interacts with ESR1 only in the presence of STK3/MST2. Interacts with WTIP and AJUBA. Phosphorylated by STK3/MST2 and STK4/MST1. Phosphorylation is not required for SAV1 stability and may increase the number of protein binding sites on the scaffold molecule.

It is found in the nucleus. The protein resides in the cytoplasm. In terms of biological role, regulator of STK3/MST2 and STK4/MST1 in the Hippo signaling pathway which plays a pivotal role in organ size control and tumor suppression by restricting proliferation and promoting apoptosis. The core of this pathway is composed of a kinase cascade wherein STK3/MST2 and STK4/MST1, in complex with its regulatory protein SAV1, phosphorylates and activates LATS1/2 in complex with its regulatory protein MOB1, which in turn phosphorylates and inactivates YAP1 oncoprotein and WWTR1/TAZ. Phosphorylation of YAP1 by LATS1/2 inhibits its translocation into the nucleus to regulate cellular genes important for cell proliferation, cell death, and cell migration. SAV1 is required for STK3/MST2 and STK4/MST1 activation and promotes cell-cycle exit and terminal differentiation in developing epithelial tissues. Plays a role in centrosome disjunction by regulating the localization of NEK2 to centrosomes, and its ability to phosphorylate CROCC and CEP250. In conjunction with STK3/MST2, activates the transcriptional activity of ESR1 through the modulation of its phosphorylation. In Rattus norvegicus (Rat), this protein is Protein salvador homolog 1.